The chain runs to 488 residues: Cruciferin (488 aa).

The first 23 residues, 1-23 (MARLSSLLSFSLALLTFLHGSTA), serve as a signal peptide directing secretion. Intrachain disulfides connect C30/C63 and C105/C305. Cupin type-1 domains are found at residues 35-262 (LNAL…RTAQ) and 311-460 (DNLD…EEAR). Residues 116-163 (QPSGGSPFGEGQGQGQQGQGQGHQGQGQGQQGQQGQQGQQSQGQGFRD) are disordered. The segment covering 121–147 (SPFGEGQGQGQQGQGQGHQGQGQGQQG) has biased composition (gly residues). The segment covering 148–160 (QQGQQGQQSQGQG) has biased composition (low complexity).

Belongs to the 11S seed storage protein (globulins) family. Hexamer; each subunit is composed of an acidic and a basic chain derived from a single precursor and linked by a disulfide bond.

It is found in the rough endoplasmic reticulum. Its function is as follows. This is a seed storage protein. This Brassica napus (Rape) protein is Cruciferin (CRUA).